The chain runs to 180 residues: Large ribosomal subunit protein uL5 (180 aa).

Belongs to the universal ribosomal protein uL5 family. In terms of assembly, part of the 50S ribosomal subunit; part of the 5S rRNA/L5/L18/L25 subcomplex. Contacts the 5S rRNA and the P site tRNA. Forms a bridge to the 30S subunit in the 70S ribosome.

Its function is as follows. This is one of the proteins that bind and probably mediate the attachment of the 5S RNA into the large ribosomal subunit, where it forms part of the central protuberance. In the 70S ribosome it contacts protein S13 of the 30S subunit (bridge B1b), connecting the 2 subunits; this bridge is implicated in subunit movement. Contacts the P site tRNA; the 5S rRNA and some of its associated proteins might help stabilize positioning of ribosome-bound tRNAs. This is Large ribosomal subunit protein uL5 from Xanthomonas oryzae pv. oryzae (strain MAFF 311018).